A 305-amino-acid polypeptide reads, in one-letter code: MNMQEVYKYLSTVLPEGHVKQDEMLKNHTHIKVGGKADVFVAPTNYDEIQEVIKYANEYNIPVTFLGNGSNVIIKDGGIRGITVSLIHITGVTVTGTTIVAQCGAAIIDVSRIALDHNLTGLEFACGIPGSVGGALYMNAGAYGGEISFVLTEAVVMTGDGELRTLTKEAFEFGYRKSVFANNHYIILEARFELEEGVHEEIKAKMDDLTFKRESKQPLEYPSCGSVFKRPPNNFAGKLIQDSGLQGKRIGGVEVSLKHAGFMVNVDNGTAQDYIDLIHFVQKTVEEKFGVKLEREVRIIGEDKE.

The 165-residue stretch at 33-197 (VGGKADVFVA…LEARFELEEG (165 aa)) folds into the FAD-binding PCMH-type domain. The active site involves Arg176. The active-site Proton donor is the Ser226. Residue Glu296 is part of the active site.

Belongs to the MurB family. It depends on FAD as a cofactor.

The protein localises to the cytoplasm. It carries out the reaction UDP-N-acetyl-alpha-D-muramate + NADP(+) = UDP-N-acetyl-3-O-(1-carboxyvinyl)-alpha-D-glucosamine + NADPH + H(+). The protein operates within cell wall biogenesis; peptidoglycan biosynthesis. In terms of biological role, cell wall formation. The chain is UDP-N-acetylenolpyruvoylglucosamine reductase 2 (murB2) from Bacillus cereus (strain ATCC 14579 / DSM 31 / CCUG 7414 / JCM 2152 / NBRC 15305 / NCIMB 9373 / NCTC 2599 / NRRL B-3711).